We begin with the raw amino-acid sequence, 536 residues long: Membrane protein insertase YidC (536 aa).

A helical membrane pass occupies residues 5–25 (ALIAVILSIVFFYGYSALFPP). The tract at residues 30 to 54 (APAPSAQQAVTGSQPGAPQASVAAV) is disordered. The segment covering 31 to 54 (PAPSAQQAVTGSQPGAPQASVAAV) has biased composition (low complexity). 4 helical membrane passes run 350-370 (YGIA…PLTH), 420-440 (LPML…MFSI), 454-474 (LAGK…MVIQ), and 494-514 (PVVF…YWLV).

This sequence belongs to the OXA1/ALB3/YidC family. Type 1 subfamily. Interacts with the Sec translocase complex via SecD. Specifically interacts with transmembrane segments of nascent integral membrane proteins during membrane integration.

The protein localises to the cell inner membrane. In terms of biological role, required for the insertion and/or proper folding and/or complex formation of integral membrane proteins into the membrane. Involved in integration of membrane proteins that insert both dependently and independently of the Sec translocase complex, as well as at least some lipoproteins. Aids folding of multispanning membrane proteins. The chain is Membrane protein insertase YidC from Geobacter metallireducens (strain ATCC 53774 / DSM 7210 / GS-15).